The sequence spans 409 residues: Proteasome-activating nucleotidase (409 aa).

A disordered region spans residues 1–22 (MTLSSAGGSRSHRHNGGHSERD). Residues 23-58 (VEIRILKDKVRSLTKEKISLQKELEYYKNEITKLLS) adopt a coiled-coil conformation. Residues 183-188 (GTGKTL) and His322 contribute to the ATP site.

This sequence belongs to the AAA ATPase family. As to quaternary structure, homohexamer. The hexameric complex has a two-ring architecture resembling a top hat that caps the 20S proteasome core at one or both ends. Upon ATP-binding, the C-terminus of PAN interacts with the alpha-rings of the proteasome core by binding to the intersubunit pockets.

The protein localises to the cytoplasm. In terms of biological role, ATPase which is responsible for recognizing, binding, unfolding and translocation of substrate proteins into the archaeal 20S proteasome core particle. Is essential for opening the gate of the 20S proteasome via an interaction with its C-terminus, thereby allowing substrate entry and access to the site of proteolysis. Thus, the C-termini of the proteasomal ATPase function like a 'key in a lock' to induce gate opening and therefore regulate proteolysis. Unfolding activity requires energy from ATP hydrolysis, whereas ATP binding alone promotes ATPase-20S proteasome association which triggers gate opening, and supports translocation of unfolded substrates. This is Proteasome-activating nucleotidase from Aeropyrum pernix (strain ATCC 700893 / DSM 11879 / JCM 9820 / NBRC 100138 / K1).